A 660-amino-acid chain; its full sequence is MRRFYRKPFSVPLLNRPHCSSQSHCLYKNGDFLSDDSKCSPLSSSRTSVRWVFNSSSLPPPEWIEPFNDVSDLVKSNRNLLPSPWVSQILNLLDGSASMESNLDGFCRKFLIKLSPNFVSFVLKSDEIREKPDIAWSFFCWSRKQKKYTHNLECYVSLVDVLALAKDVDRIRFVSSEIKKFEFPMTVSAANALIKSFGKLGMVEELLWVWRKMKENGIEPTLYTYNFLMNGLVSAMFVDSAERVFEVMESGRIKPDIVTYNTMIKGYCKAGQTQKAMEKLRDMETRGHEADKITYMTMIQACYADSDFGSCVALYQEMDEKGIQVPPHAFSLVIGGLCKEGKLNEGYTVFENMIRKGSKPNVAIYTVLIDGYAKSGSVEDAIRLLHRMIDEGFKPDVVTYSVVVNGLCKNGRVEEALDYFHTCRFDGLAINSMFYSSLIDGLGKAGRVDEAERLFEEMSEKGCTRDSYCYNALIDAFTKHRKVDEAIALFKRMEEEEGCDQTVYTYTILLSGMFKEHRNEEALKLWDMMIDKGITPTAACFRALSTGLCLSGKVARACKILDELAPMGVILDAACEDMINTLCKAGRIKEACKLADGITERGREVPGRIRTVMINALRKVGKADLAMKLMHSKIGIGYERMGSVKRRVKFTTLLETCFDS.

Residues 1-12 constitute a mitochondrion transit peptide; that stretch reads MRRFYRKPFSVP. 14 PPR repeats span residues 151 to 185, 186 to 220, 221 to 255, 256 to 290, 291 to 325, 326 to 360, 361 to 395, 396 to 430, 431 to 465, 466 to 496, 502 to 536, 537 to 571, 574 to 605, and 606 to 640; these read NLEC…EFPM, TVSA…GIEP, TLYT…RIKP, DIVT…GHEA, DKIT…GIQV, PPHA…GSKP, NVAI…GFKP, DVVT…GLAI, NSMF…GCTR, DSYC…MEEE, TVYT…GITP, TAAC…GVIL, ACED…GREV, and PGRI…GYER.

It belongs to the PPR family. P subfamily.

The protein localises to the mitochondrion. The protein is Pentatricopeptide repeat-containing protein At1g03560, mitochondrial of Arabidopsis thaliana (Mouse-ear cress).